The chain runs to 475 residues: Methylenetetrahydrofolate--tRNA-(uracil-5-)-methyltransferase TrmFO (475 aa).

Residue 13-18 participates in FAD binding; that stretch reads GAGLAG.

The protein belongs to the MnmG family. TrmFO subfamily. Requires FAD as cofactor.

The protein resides in the cytoplasm. It catalyses the reaction uridine(54) in tRNA + (6R)-5,10-methylene-5,6,7,8-tetrahydrofolate + NADH + H(+) = 5-methyluridine(54) in tRNA + (6S)-5,6,7,8-tetrahydrofolate + NAD(+). It carries out the reaction uridine(54) in tRNA + (6R)-5,10-methylene-5,6,7,8-tetrahydrofolate + NADPH + H(+) = 5-methyluridine(54) in tRNA + (6S)-5,6,7,8-tetrahydrofolate + NADP(+). Catalyzes the folate-dependent formation of 5-methyl-uridine at position 54 (M-5-U54) in all tRNAs. The sequence is that of Methylenetetrahydrofolate--tRNA-(uracil-5-)-methyltransferase TrmFO from Bradyrhizobium diazoefficiens (strain JCM 10833 / BCRC 13528 / IAM 13628 / NBRC 14792 / USDA 110).